Reading from the N-terminus, the 445-residue chain is Reticulon-4 receptor-like 1 (445 aa).

A signal peptide spans 1–24; it reads MLRKGCCVELLLLLLAGELPLGGG. An LRRNT domain is found at 25–54; that stretch reads CPRDCVCYPAPMTVSCQAHNFAAIPEGIPE. LRR repeat units lie at residues 55–76, 77–98, 101–123, 126–147, 150–171, 174–195, 198–219, and 222–243; these read DSERIFLQNNRITFLQQGHFSP, AMVTLWIYSNNITFIAPNTFEG, HLEELDLGDNRQLRTLAPETFQG, KLHALYLYKCGLSALPAGIFGG, SLQYLYLQDNHIEYLQDDIFVD, NLSHLFLHGNKLWSLGQGIFRG, NLDRLLLHENQLQWVHHKAFHD, and RLTTLFLFNNSLTELQGDCLAP. Residues 255-306 form the LRRCT domain; sequence NAWDCGCRARSLWEWLRRFRGSSSAVPCATPELRQGQDLKLLRVEDFRNCTG. 2 disordered regions span residues 307 to 377 and 401 to 424; these read PVSP…SGKE and RPKRKGKCARRTPIRAPSGVQQAS. 2 stretches are compositionally biased toward basic residues: residues 352–366 and 401–413; these read GYKKAGKNCTSHRNR and RPKRKGKCARRTP. S424 is lipidated: GPI-anchor amidated serine. A helical transmembrane segment spans residues 424–444; sequence SSGTALGAPLLAWILGLAVTL. Residues 425-445 constitute a propeptide, removed in mature form; that stretch reads SGTALGAPLLAWILGLAVTLR.

Belongs to the Nogo receptor family. Identified in a complex that contains RTN4R, RTN4RL1 and NGFR; the interaction depends on the presence of chondroitin sulfate proteoglycans. Does not interact with MAG, OMG and RTN4. As to expression, detected in brain (at protein level). Detected in retina ganglion cell layer and inner nuclear layer.

Its subcellular location is the cell membrane. The protein resides in the membrane raft. The protein localises to the perikaryon. It is found in the cell projection. Cell surface receptor that plays a functionally redundant role in postnatal brain development and in regulating axon regeneration in the adult central nervous system. Contributes to normal axon migration across the brain midline and normal formation of the corpus callosum. Protects motoneurons against apoptosis; protection against apoptosis is probably mediated by MAG. Plays a role in inhibiting neurite outgrowth and axon regeneration via its binding to neuronal chondroitin sulfate proteoglycans. Binds heparin. Like other family members, plays a role in restricting the number dendritic spines and the number of synapses that are formed during brain development. Signaling mediates activation of Rho and downstream reorganization of the actin cytoskeleton. This Mus musculus (Mouse) protein is Reticulon-4 receptor-like 1.